The primary structure comprises 342 residues: MIRADLTDIPTYVPGKNLGDALKLSSNEVAFPPLPAAVSAITEAATGANRYPDMGAVELRGVLADHLELTPEQITVGCGSSALCQQLVQATCAAGDEVIFPWRSFEAYPIFARVAGATAVPIPLLPDTQGHDLEGMLDAITDRTRLIFLCNPNNPSGTTFTEEQFEAFMQRVPADVVVGLDEAYFEFNRAEDSPVSTEAVQRYPNVIGLRTFSKAYGLAGVRVGYAFGNPELIGAMNKVAIPFAVSSLAQAAAIASLNAADELLERTEEVVTERERVAQVVGAAPSQANFVWLPGEGAAELAGRLAEHGVVIRAFPEGARITVTNAAETDRLIRAWEAVHHG.

Residue Lys214 is modified to N6-(pyridoxal phosphate)lysine.

It belongs to the class-II pyridoxal-phosphate-dependent aminotransferase family. As to quaternary structure, homodimer. Pyridoxal 5'-phosphate serves as cofactor.

It catalyses the reaction an aromatic L-alpha-amino acid + 2-oxoglutarate = an aromatic oxo-acid + L-glutamate. Aminotransferase that catalyzes the conversion of aromatic amino acids and 2-oxoglutarate into corresponding aromatic oxo acids and L-glutamate. This is Aromatic amino acid aminotransferase from Corynebacterium efficiens (strain DSM 44549 / YS-314 / AJ 12310 / JCM 11189 / NBRC 100395).